The sequence spans 111 residues: MCAKPNHLFVTVTFIFGFAVCIVQISAWTSIGKIAIKDGKCDPKNGKLYSIGEKWHNNEDCFEITCIQGNKGTVAQQVTSCPVHAMKTGCKLKFPKGEFPNCCPFYDCSKN.

The first 28 residues, 1–28 (MCAKPNHLFVTVTFIFGFAVCIVQISAW), serve as a signal peptide directing secretion.

It belongs to the scoloptoxin-16 family. Post-translationally, contains 4 disulfide bonds. As to expression, expressed by the venom gland.

Its subcellular location is the secreted. This Scolopendra morsitans (Tanzanian blue ringleg centipede) protein is U-scoloptoxin(16)-Sm2a.